Reading from the N-terminus, the 25-residue chain is Small ribosomal subunit protein eS32A (25 aa).

The disordered stretch occupies residues 1–25; the sequence is MRDKWRKKRVRRLKRKRRKMRARSK.

The protein belongs to the eukaryotic ribosomal protein eS32 family. Component of the large ribosomal subunit (LSU). Mature yeast ribosomes consist of a small (40S) and a large (60S) subunit. The 40S small subunit contains 1 molecule of ribosomal RNA (18S rRNA) and at least 33 different proteins. The large 60S subunit contains 3 rRNA molecules (25S, 5.8S and 5S rRNA) and at least 46 different proteins.

It is found in the cytoplasm. It localises to the nucleus. Functionally, component of the ribosome, a large ribonucleoprotein complex responsible for the synthesis of proteins in the cell. The small ribosomal subunit (SSU) binds messenger RNAs (mRNAs) and translates the encoded message by selecting cognate aminoacyl-transfer RNA (tRNA) molecules. The large subunit (LSU) contains the ribosomal catalytic site termed the peptidyl transferase center (PTC), which catalyzes the formation of peptide bonds, thereby polymerizing the amino acids delivered by tRNAs into a polypeptide chain. The nascent polypeptides leave the ribosome through a tunnel in the LSU and interact with protein factors that function in enzymatic processing, targeting, and the membrane insertion of nascent chains at the exit of the ribosomal tunnel. The protein is Small ribosomal subunit protein eS32A (rpl4101) of Schizosaccharomyces pombe (strain 972 / ATCC 24843) (Fission yeast).